The sequence spans 41 residues: Photosystem I reaction center subunit IX (41 aa).

Residues 7 to 27 form a helical membrane-spanning segment; that stretch reads YLSTAPVVAFAWITITAGLLI.

This sequence belongs to the PsaJ family.

It localises to the plastid. The protein localises to the chloroplast thylakoid membrane. Functionally, may help in the organization of the PsaE and PsaF subunits. The protein is Photosystem I reaction center subunit IX of Oedogonium cardiacum (Filamentous green alga).